The primary structure comprises 165 residues: Endoribonuclease YbeY (165 aa).

Zn(2+) contacts are provided by His130, His134, and His140.

Belongs to the endoribonuclease YbeY family. Requires Zn(2+) as cofactor.

The protein localises to the cytoplasm. Single strand-specific metallo-endoribonuclease involved in late-stage 70S ribosome quality control and in maturation of the 3' terminus of the 16S rRNA. This is Endoribonuclease YbeY from Streptococcus pyogenes serotype M28 (strain MGAS6180).